Consider the following 396-residue polypeptide: Elongation factor Tu (396 aa).

Residues 10–206 (KPHVNVGTIG…ALDTYIPTPE (197 aa)) enclose the tr-type G domain. Residues 19 to 26 (GHVDHGKT) are G1. Position 19–26 (19–26 (GHVDHGKT)) interacts with GTP. Threonine 26 lines the Mg(2+) pocket. The G2 stretch occupies residues 60–64 (GITIN). Residues 81 to 84 (DCPG) form a G3 region. Residues 81-85 (DCPGH) and 136-139 (NKCD) each bind GTP. Residues 136–139 (NKCD) are G4. The segment at 174 to 176 (SAK) is G5.

It belongs to the TRAFAC class translation factor GTPase superfamily. Classic translation factor GTPase family. EF-Tu/EF-1A subfamily. In terms of assembly, monomer.

It is found in the cytoplasm. It carries out the reaction GTP + H2O = GDP + phosphate + H(+). Functionally, GTP hydrolase that promotes the GTP-dependent binding of aminoacyl-tRNA to the A-site of ribosomes during protein biosynthesis. In Burkholderia mallei (strain NCTC 10247), this protein is Elongation factor Tu.